The following is a 279-amino-acid chain: Diaminopimelate epimerase (279 aa).

Residues Asn-13 and Asn-66 each contribute to the substrate site. The Proton donor role is filled by Cys-75. Residues Gly-76–Asn-77, Asn-162, Asn-195, and Glu-213–Arg-214 each bind substrate. Cys-222 serves as the catalytic Proton acceptor. Gly-223–Thr-224 contributes to the substrate binding site.

The protein belongs to the diaminopimelate epimerase family. Homodimer.

The protein localises to the cytoplasm. The enzyme catalyses (2S,6S)-2,6-diaminopimelate = meso-2,6-diaminopimelate. Its pathway is amino-acid biosynthesis; L-lysine biosynthesis via DAP pathway; DL-2,6-diaminopimelate from LL-2,6-diaminopimelate: step 1/1. Functionally, catalyzes the stereoinversion of LL-2,6-diaminopimelate (L,L-DAP) to meso-diaminopimelate (meso-DAP), a precursor of L-lysine and an essential component of the bacterial peptidoglycan. The sequence is that of Diaminopimelate epimerase from Synechocystis sp. (strain ATCC 27184 / PCC 6803 / Kazusa).